Reading from the N-terminus, the 445-residue chain is Probable fructoselysine/psicoselysine transporter FrlA (445 aa).

Transmembrane regions (helical) follow at residues 10–32, 39–61, 97–119, 126–143, 153–175, 188–210, 230–252, 272–294, 341–363, 384–406, and 411–433; these read LGFW…FVSV, AGTP…PQMC, FWAN…LGFL, LGKF…LLHL, QTLI…IFWF, IGAT…SYTG, RALI…VISG, WIPA…VILG, GIFF…VMCF, LWRT…ILVA, and WAPI…AYAF.

The protein belongs to the amino acid-polyamine-organocation (APC) superfamily.

The protein localises to the cell inner membrane. It catalyses the reaction N(6)-(D-fructosyl)-L-lysine(in) = N(6)-(D-fructosyl)-L-lysine(out). It carries out the reaction N(6)-(D-psicosyl)-L-lysine(in) = N(6)-(D-psicosyl)-L-lysine(out). Its pathway is carbohydrate metabolism; fructoselysine degradation. Is likely involved in the transport of fructoselysine and psicoselysine to the cytoplasm, where they are degraded. The chain is Probable fructoselysine/psicoselysine transporter FrlA (frlA) from Escherichia coli O157:H7.